The primary structure comprises 372 residues: Cytochrome b (372 aa).

4 consecutive transmembrane segments (helical) span residues 25 to 45 (FGSMLLTCTALQTTTGFFLAI), 69 to 90 (WIMQNIHATGASMFFICIYIHI), 105 to 125 (WVSGTTLLVTLMATAFFGYVL), and 170 to 190 (FFALHFILPFIIISTSLIHVM). Heme b contacts are provided by His-75 and His-89. The heme b site is built by His-174 and His-188. His-193 contacts a ubiquinone. A run of 4 helical transmembrane segments spans residues 218–238 (YKDTLMLTTLLTLLFITTSFF), 280–300 (LGGTMALVMSIIILLTAPFTH), 312–332 (MAQVLFWTFIATFMLITWAAT), and 339–358 (FTTIGLSTSILYFSFFIINP).

The protein belongs to the cytochrome b family. As to quaternary structure, the cytochrome bc1 complex contains 3 respiratory subunits (MT-CYB, CYC1 and UQCRFS1), 2 core proteins (UQCRC1 and UQCRC2) and probably 6 low-molecular weight proteins. Heme b serves as cofactor.

The protein localises to the mitochondrion inner membrane. Functionally, component of the ubiquinol-cytochrome c reductase complex (complex III or cytochrome b-c1 complex) that is part of the mitochondrial respiratory chain. The b-c1 complex mediates electron transfer from ubiquinol to cytochrome c. Contributes to the generation of a proton gradient across the mitochondrial membrane that is then used for ATP synthesis. The sequence is that of Cytochrome b (MT-CYB) from Heterodon simus (Southern hognose snake).